The sequence spans 75 residues: Large ribosomal subunit protein bL31 (75 aa).

This sequence belongs to the bacterial ribosomal protein bL31 family. Type A subfamily. Part of the 50S ribosomal subunit.

Binds the 23S rRNA. This is Large ribosomal subunit protein bL31 from Chlorobium limicola (strain DSM 245 / NBRC 103803 / 6330).